Here is a 578-residue protein sequence, read N- to C-terminus: ATP-dependent RNA helicase has1 (578 aa).

Over residues 1–12 (MAKSELKRKKHQ) the composition is skewed to basic residues. A disordered region spans residues 1-81 (MAKSELKRKK…ERVQKSVNLN (81 aa)). Acidic residues-rich tracts occupy residues 36–53 (LPQDEDDYEQEEENEDAD) and 60–71 (SESEELDNENED). Phosphoserine is present on residues Ser60 and Ser62. The short motif at 89-117 (EKFSDLQLSENIQKAIKEMGFETMTEIQK) is the Q motif element. Residues 120–296 (IPPLLAGRDV…RISLKPGPLY (177 aa)) form the Helicase ATP-binding domain. 133 to 140 (AKTGSGKT) is a binding site for ATP. Residues 243 to 246 (DEAD) carry the DEAD box motif. A Helicase C-terminal domain is found at 310 to 480 (GLEQGYVVVD…NVQSQLEKLV (171 aa)). A Bipartite nuclear localization signal motif is present at residues 322–338 (KRFLLLFSFLKRNLKKK). The span at 543–561 (DKKERRAGYNKKNHVDVYS) shows a compositional bias: basic and acidic residues. Residues 543–578 (DKKERRAGYNKKNHVDVYSKQRSSAISQDKERGWSR) form a disordered region.

Belongs to the DEAD box helicase family. DDX18/HAS1 subfamily. In terms of assembly, associates in the nucleolus with the 60S and pre-60S ribosomal subunits.

It is found in the nucleus. The protein resides in the nucleolus. The catalysed reaction is ATP + H2O = ADP + phosphate + H(+). In terms of biological role, ATP-dependent RNA helicase involved in 40S ribosomal subunit biogenesis. Required for the processing and cleavage of 35S pre-rRNA at sites A0, A1, and A2, leading to mature 18S rRNA. The protein is ATP-dependent RNA helicase has1 (has1) of Schizosaccharomyces pombe (strain 972 / ATCC 24843) (Fission yeast).